The sequence spans 158 residues: Transcription elongation factor GreA (158 aa).

The stretch at Thr-8–Thr-74 forms a coiled coil.

Belongs to the GreA/GreB family.

Necessary for efficient RNA polymerase transcription elongation past template-encoded arresting sites. The arresting sites in DNA have the property of trapping a certain fraction of elongating RNA polymerases that pass through, resulting in locked ternary complexes. Cleavage of the nascent transcript by cleavage factors such as GreA or GreB allows the resumption of elongation from the new 3'terminus. GreA releases sequences of 2 to 3 nucleotides. The polypeptide is Transcription elongation factor GreA (Chloroherpeton thalassium (strain ATCC 35110 / GB-78)).